A 261-amino-acid chain; its full sequence is Cytochrome c oxidase subunit 3 (261 aa).

Residues 1-15 lie on the Mitochondrial matrix side of the membrane; sequence MTHQTHAYHMVNPSP. Residues 16–34 form a helical membrane-spanning segment; that stretch reads WPLTGALSALLMTSGLIMW. Residues 35–40 are Mitochondrial intermembrane-facing; it reads FHYNSM. Residues 41 to 66 form a helical membrane-spanning segment; sequence SLLTLGFTTNLLTMYQWWRDVIREGT. At 67-72 the chain is on the mitochondrial matrix side; the sequence is FQGHHT. Residues 73–105 form a helical membrane-spanning segment; sequence PIVQKGLRYGMVLFIVSEVFFFAGFFWAFYHSS. Residues 106 to 128 lie on the Mitochondrial intermembrane side of the membrane; it reads LAPTPELGGCWPPTGIIPLNPLE. A helical transmembrane segment spans residues 129–152; sequence VPLLNTSVLLASGVSITWAHHSLM. Topologically, residues 153–155 are mitochondrial matrix; the sequence is EGN. The chain crosses the membrane as a helical span at residues 156-183; the sequence is RKHMLQALFITISLGVYFTLLQASEYYE. The Mitochondrial intermembrane segment spans residues 184-190; sequence TSFTISD. Residues 191 to 223 traverse the membrane as a helical segment; the sequence is GVYGSTFFMATGFHGLHVIIGSTFLIVCFLRQL. Over 224 to 232 the chain is Mitochondrial matrix; that stretch reads YYHFTSNHH. Residues 233–256 traverse the membrane as a helical segment; the sequence is FGFEAAAWYWHFVDVVWLFLYVSI. The Mitochondrial intermembrane segment spans residues 257-261; the sequence is YWWGS.

This sequence belongs to the cytochrome c oxidase subunit 3 family. Component of the cytochrome c oxidase (complex IV, CIV), a multisubunit enzyme composed of 14 subunits. The complex is composed of a catalytic core of 3 subunits MT-CO1, MT-CO2 and MT-CO3, encoded in the mitochondrial DNA, and 11 supernumerary subunits COX4I, COX5A, COX5B, COX6A, COX6B, COX6C, COX7A, COX7B, COX7C, COX8 and NDUFA4, which are encoded in the nuclear genome. The complex exists as a monomer or a dimer and forms supercomplexes (SCs) in the inner mitochondrial membrane with NADH-ubiquinone oxidoreductase (complex I, CI) and ubiquinol-cytochrome c oxidoreductase (cytochrome b-c1 complex, complex III, CIII), resulting in different assemblies (supercomplex SCI(1)III(2)IV(1) and megacomplex MCI(2)III(2)IV(2)).

It localises to the mitochondrion inner membrane. It catalyses the reaction 4 Fe(II)-[cytochrome c] + O2 + 8 H(+)(in) = 4 Fe(III)-[cytochrome c] + 2 H2O + 4 H(+)(out). Component of the cytochrome c oxidase, the last enzyme in the mitochondrial electron transport chain which drives oxidative phosphorylation. The respiratory chain contains 3 multisubunit complexes succinate dehydrogenase (complex II, CII), ubiquinol-cytochrome c oxidoreductase (cytochrome b-c1 complex, complex III, CIII) and cytochrome c oxidase (complex IV, CIV), that cooperate to transfer electrons derived from NADH and succinate to molecular oxygen, creating an electrochemical gradient over the inner membrane that drives transmembrane transport and the ATP synthase. Cytochrome c oxidase is the component of the respiratory chain that catalyzes the reduction of oxygen to water. Electrons originating from reduced cytochrome c in the intermembrane space (IMS) are transferred via the dinuclear copper A center (CU(A)) of subunit 2 and heme A of subunit 1 to the active site in subunit 1, a binuclear center (BNC) formed by heme A3 and copper B (CU(B)). The BNC reduces molecular oxygen to 2 water molecules using 4 electrons from cytochrome c in the IMS and 4 protons from the mitochondrial matrix. The protein is Cytochrome c oxidase subunit 3 (MT-CO3) of Canis lupus (Gray wolf).